The sequence spans 243 residues: Adenine phosphoribosyltransferase 1, chloroplastic (243 aa).

A chloroplast-targeting transit peptide spans M1–S52. Q2 carries the post-translational modification N-acetylalanine.

Belongs to the purine/pyrimidine phosphoribosyltransferase family. As to quaternary structure, homodimer.

It is found in the plastid. It localises to the chloroplast. Its subcellular location is the cytoplasm. It catalyses the reaction AMP + diphosphate = 5-phospho-alpha-D-ribose 1-diphosphate + adenine. The protein operates within purine metabolism; AMP biosynthesis via salvage pathway; AMP from adenine: step 1/1. Catalyzes a salvage reaction resulting in the formation of AMP, that is energically less costly than de novo synthesis. Contributes primarily to the recycling of adenine into adenylate nucleotides, but is also involved in the inactivation of cytokinins by phosphoribosylation. Catalyzes the conversion of cytokinins from free bases (active form) to the corresponding nucleotides (inactive form). This is Adenine phosphoribosyltransferase 1, chloroplastic (APT1) from Arabidopsis thaliana (Mouse-ear cress).